Here is a 609-residue protein sequence, read N- to C-terminus: Isocitrate dehydrogenase kinase/phosphatase (609 aa).

Residues 325–331 and K346 contribute to the ATP site; that span reads APGIKGM. Residue D381 is part of the active site.

Belongs to the AceK family.

The protein localises to the cytoplasm. The enzyme catalyses L-seryl-[isocitrate dehydrogenase] + ATP = O-phospho-L-seryl-[isocitrate dehydrogenase] + ADP + H(+). In terms of biological role, bifunctional enzyme which can phosphorylate or dephosphorylate isocitrate dehydrogenase (IDH) on a specific serine residue. This is a regulatory mechanism which enables bacteria to bypass the Krebs cycle via the glyoxylate shunt in response to the source of carbon. When bacteria are grown on glucose, IDH is fully active and unphosphorylated, but when grown on acetate or ethanol, the activity of IDH declines drastically concomitant with its phosphorylation. The chain is Isocitrate dehydrogenase kinase/phosphatase from Acidovorax sp. (strain JS42).